A 124-amino-acid chain; its full sequence is Small ribosomal subunit protein uS12 (124 aa).

A disordered region spans residues 1–22 (MATVNQLVRKPRKRKVAKSDVP). Position 89 is a 3-methylthioaspartic acid (D89). The segment at 99 to 124 (RGSLDTSGVQNRKQGRSKYGTKRPKK) is disordered. The segment covering 111 to 124 (KQGRSKYGTKRPKK) has biased composition (basic residues).

It belongs to the universal ribosomal protein uS12 family. As to quaternary structure, part of the 30S ribosomal subunit. Contacts proteins S8 and S17. May interact with IF1 in the 30S initiation complex.

Its function is as follows. With S4 and S5 plays an important role in translational accuracy. Functionally, interacts with and stabilizes bases of the 16S rRNA that are involved in tRNA selection in the A site and with the mRNA backbone. Located at the interface of the 30S and 50S subunits, it traverses the body of the 30S subunit contacting proteins on the other side and probably holding the rRNA structure together. The combined cluster of proteins S8, S12 and S17 appears to hold together the shoulder and platform of the 30S subunit. This Marinomonas sp. (strain MWYL1) protein is Small ribosomal subunit protein uS12.